Consider the following 65-residue polypeptide: Large ribosomal subunit protein bL35 (65 aa).

The protein belongs to the bacterial ribosomal protein bL35 family.

The sequence is that of Large ribosomal subunit protein bL35 from Acaryochloris marina (strain MBIC 11017).